Reading from the N-terminus, the 460-residue chain is Methylenetetrahydrofolate--tRNA-(uracil-5-)-methyltransferase TrmFO (460 aa).

15–20 contributes to the FAD binding site; the sequence is GAGLAG.

Belongs to the MnmG family. TrmFO subfamily. It depends on FAD as a cofactor.

The protein localises to the cytoplasm. The catalysed reaction is uridine(54) in tRNA + (6R)-5,10-methylene-5,6,7,8-tetrahydrofolate + NADH + H(+) = 5-methyluridine(54) in tRNA + (6S)-5,6,7,8-tetrahydrofolate + NAD(+). It catalyses the reaction uridine(54) in tRNA + (6R)-5,10-methylene-5,6,7,8-tetrahydrofolate + NADPH + H(+) = 5-methyluridine(54) in tRNA + (6S)-5,6,7,8-tetrahydrofolate + NADP(+). Its function is as follows. Catalyzes the folate-dependent formation of 5-methyl-uridine at position 54 (M-5-U54) in all tRNAs. This chain is Methylenetetrahydrofolate--tRNA-(uracil-5-)-methyltransferase TrmFO, found in Synechococcus sp. (strain CC9902).